The sequence spans 1866 residues: Protein NLRC5 (1866 aa).

Positions 105 to 135 (GAEGKSQPESQLHHGLKRPHQSCGSSPRRKQ) are disordered. Residues 222–539 (RVTVLLGKAG…PKVNKDTLTQ (318 aa)) enclose the NACHT domain. 228-235 (GKAGMGKT) is an ATP binding site. 26 LRR repeats span residues 599–622 (LKKL…VDET), 713–737 (MGRL…LVKA), 741–765 (CPQL…IVEV), 769–792 (LPRL…CLAR), 869–892 (GPHL…LMAE), 897–921 (LHIA…VLRA), 930–953 (ELHI…EQKG), 976–1000 (SRRM…ALGG), 1004–1026 (LGHL…RLAQ), 1031–1058 (LGAL…CFST), 1138–1161 (LELQ…CLPQ), 1162–1184 (LPQL…FLLA), 1242–1265 (CKDL…CLLE), 1272–1294 (ISGL…LLET), 1462–1488 (CARL…LLQS), 1493–1516 (LSEL…HLAS), 1521–1544 (CHHL…ALMR), 1554–1577 (RLDL…LSQM), 1578–1600 (TCLQ…HLSE), 1605–1628 (ATSL…HLAT), 1633–1656 (LPEL…QLAE), 1661–1684 (CRRL…GLAQ), 1687–1714 (PQHL…ALDG), 1715–1739 (SPHL…CMEL), 1741–1762 (LLRQ…LLTS), and 1795–1818 (MGRL…LLAE).

This sequence belongs to the NLRP family. Interacts with CHUK and IKBKB; prevents CHUK and IKBKB phosphorylation and inhibits their kinase activity. Interacts with RIGI and IFIH1; blocks the interaction of MAVS to RIGI. As to expression, expressed in spleen, thymus, lung, brain, tonsil, heart and prostate.

It is found in the cytoplasm. In terms of biological role, probable regulator of the NF-kappa-B and type I interferon signaling pathways. May also regulate the type II interferon signaling pathway. Plays a role in homeostatic control of innate immunity and in antiviral defense mechanisms. This chain is Protein NLRC5 (NLRC5), found in Homo sapiens (Human).